A 432-amino-acid chain; its full sequence is Gamma-glutamyl phosphate reductase (432 aa).

Belongs to the gamma-glutamyl phosphate reductase family.

The protein localises to the cytoplasm. It catalyses the reaction L-glutamate 5-semialdehyde + phosphate + NADP(+) = L-glutamyl 5-phosphate + NADPH + H(+). Its pathway is amino-acid biosynthesis; L-proline biosynthesis; L-glutamate 5-semialdehyde from L-glutamate: step 2/2. Functionally, catalyzes the NADPH-dependent reduction of L-glutamate 5-phosphate into L-glutamate 5-semialdehyde and phosphate. The product spontaneously undergoes cyclization to form 1-pyrroline-5-carboxylate. The protein is Gamma-glutamyl phosphate reductase of Psychrobacter sp. (strain PRwf-1).